The sequence spans 315 residues: Glycine--tRNA ligase alpha subunit (315 aa).

It belongs to the class-II aminoacyl-tRNA synthetase family. As to quaternary structure, tetramer of two alpha and two beta subunits.

It localises to the cytoplasm. It catalyses the reaction tRNA(Gly) + glycine + ATP = glycyl-tRNA(Gly) + AMP + diphosphate. The polypeptide is Glycine--tRNA ligase alpha subunit (Pseudomonas entomophila (strain L48)).